A 163-amino-acid chain; its full sequence is Auxin-responsive protein IAA5 (163 aa).

An EAR-like (transcriptional repression) motif is present at residues 15-19 (LRLGL). Residues 74-160 (SSYVKVSVDG…KRLRIMKRSC (87 aa)) enclose the PB1 domain.

It belongs to the Aux/IAA family. In terms of assembly, homodimers and heterodimers. Highly expressed in stems and flowers.

It is found in the nucleus. Functionally, aux/IAA proteins are short-lived transcriptional factors that function as repressors of early auxin response genes at low auxin concentrations. Repression is thought to result from the interaction with auxin response factors (ARFs), proteins that bind to the auxin-responsive promoter element (AuxRE). Formation of heterodimers with ARF proteins may alter their ability to modulate early auxin response genes expression. The protein is Auxin-responsive protein IAA5 (IAA5) of Arabidopsis thaliana (Mouse-ear cress).